The primary structure comprises 700 residues: uncharacterized protein (700 aa).

Residues C307, C310, C314, and C558 each coordinate [4Fe-4S] cluster.

This sequence belongs to the AOR/FOR family. The cofactor is [4Fe-4S] cluster. It depends on Mo-molybdopterin as a cofactor. Tungstopterin is required as a cofactor.

This is an uncharacterized protein from Escherichia coli (strain K12).